The sequence spans 112 residues: Type III inner-rod protein PscI (112 aa).

Belongs to the YscI/HrpB family. As to quaternary structure, homomultimer (through its C-terminal region).

In terms of biological role, component of the type III secretion (T3S) injectisome that translocates effector toxins into host cells, facilitating the establishment and dissemination of infection. Polymerizes into flexible and regularly twisted fibrils and plays an essential role in needle assembly. This Pseudomonas aeruginosa (strain ATCC 15692 / DSM 22644 / CIP 104116 / JCM 14847 / LMG 12228 / 1C / PRS 101 / PAO1) protein is Type III inner-rod protein PscI (pscI).